A 177-amino-acid polypeptide reads, in one-letter code: Prorelaxin (177 aa).

The signal sequence occupies residues 1-22; that stretch reads MSCKFVLQLLGFWLLLSQPCRA. Intrachain disulfides connect Cys36/Cys164, Cys48/Cys177, and Cys163/Cys168. A propeptide spans 64–149 (connecting peptide); sequence MTEEAVSSFI…LKSLYLDTLS (86 aa). The interval 80-114 is disordered; it reads FDTMPNLSEKPKTALPEGHPSLPEQQQYVPVSSDS. Residues 102–114 are compositionally biased toward polar residues; that stretch reads PEQQQYVPVSSDS.

The protein belongs to the insulin family. Heterodimer of a B chain and an A chain linked by two disulfide bonds.

It localises to the secreted. In terms of biological role, relaxin is an ovarian hormone that acts with estrogen to produce dilatation of the birth canal in many mammals. It bears mature young, and allows separation of the pelvic bones. This is Prorelaxin (RLN) from Mesocricetus auratus (Golden hamster).